A 271-amino-acid chain; its full sequence is Hydroxyethylthiazole kinase (271 aa).

Methionine 45 lines the substrate pocket. Residues arginine 121 and threonine 168 each contribute to the ATP site. Residue glycine 195 coordinates substrate.

Belongs to the Thz kinase family. It depends on Mg(2+) as a cofactor.

It carries out the reaction 5-(2-hydroxyethyl)-4-methylthiazole + ATP = 4-methyl-5-(2-phosphooxyethyl)-thiazole + ADP + H(+). Its pathway is cofactor biosynthesis; thiamine diphosphate biosynthesis; 4-methyl-5-(2-phosphoethyl)-thiazole from 5-(2-hydroxyethyl)-4-methylthiazole: step 1/1. In terms of biological role, catalyzes the phosphorylation of the hydroxyl group of 4-methyl-5-beta-hydroxyethylthiazole (THZ). This chain is Hydroxyethylthiazole kinase, found in Bacillus pumilus (strain SAFR-032).